The chain runs to 142 residues: Small ribosomal subunit protein bS6 (142 aa).

The segment covering 110–133 (NKKPSHAKEKHEKTEHTHSHHTEE) has biased composition (basic and acidic residues). The disordered stretch occupies residues 110 to 142 (NKKPSHAKEKHEKTEHTHSHHTEEAESVGSHSE).

It belongs to the bacterial ribosomal protein bS6 family.

In terms of biological role, binds together with bS18 to 16S ribosomal RNA. The polypeptide is Small ribosomal subunit protein bS6 (rpsF) (Helicobacter pylori (strain ATCC 700392 / 26695) (Campylobacter pylori)).